Here is a 502-residue protein sequence, read N- to C-terminus: ATP synthase subunit alpha (502 aa).

Glycine 169–threonine 176 lines the ATP pocket.

This sequence belongs to the ATPase alpha/beta chains family. In terms of assembly, F-type ATPases have 2 components, CF(1) - the catalytic core - and CF(0) - the membrane proton channel. CF(1) has five subunits: alpha(3), beta(3), gamma(1), delta(1), epsilon(1). CF(0) has three main subunits: a(1), b(2) and c(9-12). The alpha and beta chains form an alternating ring which encloses part of the gamma chain. CF(1) is attached to CF(0) by a central stalk formed by the gamma and epsilon chains, while a peripheral stalk is formed by the delta and b chains.

The protein resides in the cell membrane. The enzyme catalyses ATP + H2O + 4 H(+)(in) = ADP + phosphate + 5 H(+)(out). Produces ATP from ADP in the presence of a proton gradient across the membrane. The alpha chain is a regulatory subunit. The sequence is that of ATP synthase subunit alpha from Staphylococcus aureus (strain bovine RF122 / ET3-1).